Reading from the N-terminus, the 507-residue chain is Glycerol kinase 1 (507 aa).

T12 serves as a coordination point for ADP. Residues T12, T13, and S14 each contribute to the ATP site. T12 provides a ligand contact to sn-glycerol 3-phosphate. R16 is a binding site for ADP. R82, E83, Y134, and D249 together coordinate sn-glycerol 3-phosphate. Glycerol is bound by residues R82, E83, Y134, D249, and Q250. Residues T271 and G315 each contribute to the ADP site. ATP contacts are provided by T271, G315, Q319, and G416. 2 residues coordinate ADP: G416 and N420.

The protein belongs to the FGGY kinase family.

The enzyme catalyses glycerol + ATP = sn-glycerol 3-phosphate + ADP + H(+). It functions in the pathway polyol metabolism; glycerol degradation via glycerol kinase pathway; sn-glycerol 3-phosphate from glycerol: step 1/1. Its activity is regulated as follows. Inhibited by fructose 1,6-bisphosphate (FBP). Its function is as follows. Key enzyme in the regulation of glycerol uptake and metabolism. Catalyzes the phosphorylation of glycerol to yield sn-glycerol 3-phosphate. The sequence is that of Glycerol kinase 1 from Streptomyces coelicolor (strain ATCC BAA-471 / A3(2) / M145).